The chain runs to 284 residues: MINFDEFPPKYDPSLRPPALTTGLIVFTFMLCVIKSVTSYTFESLILYPRAPLDLNLNSISLYSLFHVNFFHWICNIFTLATPLAVFETRNGTIHTGVTLNLLTVIAALQYCIVGLIFYPNTGVIGLSGIAFSLMSYMAYHESKFRPIMHTFHLSNSLEIKLYTLYVPFVVAIVFMILFPSSSLPGHLFGITTGYLLSYGYIDKLYPPSKVITTIENKLSSLINFLELIVTFYKEEESLVTRGSVGYKPLFNQDIEHGAANAASHGSSAFVGETRVLGTRESTV.

6 helical membrane passes run 17-37, 66-86, 98-118, 124-141, 160-180, and 182-202; these read PPAL…IKSV, FHVN…PLAV, VTLN…GLIF, VIGL…MAYH, IKLY…ILFP, and SSLP…YGYI. Residue Ser-128 is the Nucleophile of the active site. Residue His-187 is part of the active site.

It belongs to the peptidase S54 family.

The protein resides in the golgi apparatus membrane. Its subcellular location is the golgi apparatus. The protein localises to the cis-Golgi network membrane. It carries out the reaction Cleaves type-1 transmembrane domains using a catalytic dyad composed of serine and histidine that are contributed by different transmembrane domains.. In terms of biological role, probable rhomboid-type serine protease that catalyzes intramembrane proteolysis. This is Rhomboid-type serine protease 2 (RBD2) from Candida albicans (strain SC5314 / ATCC MYA-2876) (Yeast).